We begin with the raw amino-acid sequence, 235 residues long: KNMITGAAQMDGAILVCSAADGPMPQTREHILLSKQVGVPHIVVFLNKQDQVDDEELLELVELEVRELLSSYDFPGDDIPIVAGSALKAVEALQANSSIGKGEDEWVDKIHDLVAQVDEYIPAPERDIDKPFLMAVEDVFSITGRGTVATGRIERGKVKVGEQIEIVGIRDTTQSTVTGVEMFQKTLDEGMAGDNVGVLLRGIQKEDILRGMVLAKPGSITPHTKFEAEVYVLIG.

Residues 1 to 125 enclose the tr-type G domain; that stretch reads KNMITGAAQM…QVDEYIPAPE (125 aa). 47–50 contributes to the GTP binding site; it reads NKQD.

The protein belongs to the TRAFAC class translation factor GTPase superfamily. Classic translation factor GTPase family. EF-Tu/EF-1A subfamily. In terms of assembly, monomer.

The protein localises to the cytoplasm. The enzyme catalyses GTP + H2O = GDP + phosphate + H(+). Functionally, GTP hydrolase that promotes the GTP-dependent binding of aminoacyl-tRNA to the A-site of ribosomes during protein biosynthesis. This Leptolyngbya ectocarpi (Phormidium ectocarpi) protein is Elongation factor Tu (tufA).